The sequence spans 127 residues: MATISRKKKKVKVTPEGAVHIKASFNNVLVTITDMQGNTVSWSSAGKNGFKGSKKNTPYASQVTSEAAAKEAFDLGMRYVHVFIKGPGSGRDAAIRALQGAGLDVKTIKDITPLPHNGCRPPKRRRV.

Belongs to the universal ribosomal protein uS11 family. In terms of assembly, part of the 30S ribosomal subunit. Interacts with proteins S7 and S18. Binds to IF-3.

In terms of biological role, located on the platform of the 30S subunit, it bridges several disparate RNA helices of the 16S rRNA. Forms part of the Shine-Dalgarno cleft in the 70S ribosome. This chain is Small ribosomal subunit protein uS11, found in Prosthecochloris aestuarii (strain DSM 271 / SK 413).